A 298-amino-acid polypeptide reads, in one-letter code: Aspartate carbamoyltransferase catalytic subunit (298 aa).

Residues R50 and T51 each contribute to the carbamoyl phosphate site. K79 lines the L-aspartate pocket. Residues R100, H128, and Q131 each coordinate carbamoyl phosphate. Positions 160 and 221 each coordinate L-aspartate. Residues L260 and P261 each contribute to the carbamoyl phosphate site.

The protein belongs to the aspartate/ornithine carbamoyltransferase superfamily. ATCase family. In terms of assembly, heterooligomer of catalytic and regulatory chains.

It catalyses the reaction carbamoyl phosphate + L-aspartate = N-carbamoyl-L-aspartate + phosphate + H(+). It participates in pyrimidine metabolism; UMP biosynthesis via de novo pathway; (S)-dihydroorotate from bicarbonate: step 2/3. Catalyzes the condensation of carbamoyl phosphate and aspartate to form carbamoyl aspartate and inorganic phosphate, the committed step in the de novo pyrimidine nucleotide biosynthesis pathway. The polypeptide is Aspartate carbamoyltransferase catalytic subunit (Methanosphaerula palustris (strain ATCC BAA-1556 / DSM 19958 / E1-9c)).